The chain runs to 249 residues: uncharacterized protein (249 aa).

2 helical membrane passes run I49–L69 and I223–L243.

The protein localises to the cell membrane. This is an uncharacterized protein from Bacillus anthracis.